Here is a 279-residue protein sequence, read N- to C-terminus: 1-(5-phosphoribosyl)-5-[(5-phosphoribosylamino)methylideneamino] imidazole-4-carboxamide isomerase (279 aa).

This sequence belongs to the HisA/HisF family.

It is found in the cytoplasm. The enzyme catalyses 1-(5-phospho-beta-D-ribosyl)-5-[(5-phospho-beta-D-ribosylamino)methylideneamino]imidazole-4-carboxamide = 5-[(5-phospho-1-deoxy-D-ribulos-1-ylimino)methylamino]-1-(5-phospho-beta-D-ribosyl)imidazole-4-carboxamide. Its pathway is amino-acid biosynthesis; L-histidine biosynthesis; L-histidine from 5-phospho-alpha-D-ribose 1-diphosphate: step 4/9. This chain is 1-(5-phosphoribosyl)-5-[(5-phosphoribosylamino)methylideneamino] imidazole-4-carboxamide isomerase (HIS6), found in Candida albicans (Yeast).